The chain runs to 211 residues: Potassium-transporting ATPase KdpC subunit (211 aa).

Residues 13–35 traverse the membrane as a helical segment; sequence VVTMVLTGLLYPLAVTGLAQLLF.

The protein belongs to the KdpC family. In terms of assembly, the system is composed of three essential subunits: KdpA, KdpB and KdpC.

The protein resides in the cell membrane. Part of the high-affinity ATP-driven potassium transport (or Kdp) system, which catalyzes the hydrolysis of ATP coupled with the electrogenic transport of potassium into the cytoplasm. This subunit acts as a catalytic chaperone that increases the ATP-binding affinity of the ATP-hydrolyzing subunit KdpB by the formation of a transient KdpB/KdpC/ATP ternary complex. In Myxococcus xanthus, this protein is Potassium-transporting ATPase KdpC subunit.